Consider the following 203-residue polypeptide: Guanylate kinase (203 aa).

The 179-residue stretch at 5–183 (GVLYILSAPS…AVEELKSVII (179 aa)) folds into the Guanylate kinase-like domain. Residue 12–19 (APSGAGKT) coordinates ATP.

Belongs to the guanylate kinase family.

The protein resides in the cytoplasm. The catalysed reaction is GMP + ATP = GDP + ADP. In terms of biological role, essential for recycling GMP and indirectly, cGMP. This chain is Guanylate kinase, found in Geobacter sulfurreducens (strain ATCC 51573 / DSM 12127 / PCA).